The chain runs to 208 residues: Sexual inducer glycoprotein (208 aa).

An N-terminal signal peptide occupies residues 1-11 (MAVVVVNSATA). Residues Asn89, Asn119, Asn131, Asn139, Asn146, and Asn188 are each glycosylated (N-linked (GlcNAc...) asparagine).

In terms of biological role, the sexual inducer is a glycoprotein synthesized and released by sexual males at about the time they release sperm packets. It is one of the most potent biological effector molecules known: it exhibits full effectiveness in converting asexually growing males and females to the sexual pathway at about 10(-7) m. The polypeptide is Sexual inducer glycoprotein (Volvox carteri (Green alga)).